The following is a 610-amino-acid chain: tRNA uridine 5-carboxymethylaminomethyl modification enzyme MnmG (610 aa).

14-19 (GAGHAG) serves as a coordination point for FAD. Residue 274 to 288 (GPRYCPSIEDKIVKF) participates in NAD(+) binding.

Belongs to the MnmG family. As to quaternary structure, homodimer. Heterotetramer of two MnmE and two MnmG subunits. The cofactor is FAD.

It localises to the cytoplasm. Functionally, NAD-binding protein involved in the addition of a carboxymethylaminomethyl (cmnm) group at the wobble position (U34) of certain tRNAs, forming tRNA-cmnm(5)s(2)U34. The sequence is that of tRNA uridine 5-carboxymethylaminomethyl modification enzyme MnmG from Chlamydia trachomatis serovar D (strain ATCC VR-885 / DSM 19411 / UW-3/Cx).